The primary structure comprises 461 residues: MKIRHLLLLAGLVSAPAIVAAQQTALPSSSAAQASGDDDGGLTGSVSDESEWQDLGIAIPSFPTNASVPTAAEGGTTEALGRNVARVVFNDLKNNGLFKPVGPDALPAIAFPQVAAPAFDAWRGRSAEMLVQGFVKANEDGRLTVGCYLYDVALGSELARQGYVVKPEEWRRAAHKCADMVYSRLSGESPFFDSKIAYIAETGPKDRRRKQLAIMDSDGANHRFITNGQATALTPRYSPDYSQIVYLSYLNGAPRIYIYNIGTGQQKLVTSSTNPTFAPRWSPDGKWILYSMSVAGNTDIYRVSVNGGASTRLTDSPGIDVGGSYSPDGSRIVFESDRSGSQQLYVMNADGSNQKRISFFGGRAATPEWSPRGDQIAFTHLGGNFRIAVTDPSGGNMRFLTDSWQDEAPTWSPNGRIVQFFRTERGSGKTGIWQVDLTGRNERKLNTPVDGSDPAWGPVLP.

An N-terminal signal peptide occupies residues 1–20; sequence MKIRHLLLLAGLVSAPAIVA. A disordered region spans residues 28-47; sequence SSSAAQASGDDDGGLTGSVS.

This sequence belongs to the TolB family. The Tol-Pal system is composed of five core proteins: the inner membrane proteins TolA, TolQ and TolR, the periplasmic protein TolB and the outer membrane protein Pal. They form a network linking the inner and outer membranes and the peptidoglycan layer.

The protein resides in the periplasm. In terms of biological role, part of the Tol-Pal system, which plays a role in outer membrane invagination during cell division and is important for maintaining outer membrane integrity. The sequence is that of Tol-Pal system protein TolB 2 from Novosphingobium aromaticivorans (strain ATCC 700278 / DSM 12444 / CCUG 56034 / CIP 105152 / NBRC 16084 / F199).